A 399-amino-acid polypeptide reads, in one-letter code: Succinate--CoA ligase [ADP-forming] subunit beta (399 aa).

Residues 9 to 254 (KALLREFGVP…ESEEDAKEIE (246 aa)) form the ATP-grasp domain. Residues lysine 46, 53-55 (GRG), glutamate 109, serine 112, and glutamate 117 contribute to the ATP site. Mg(2+) contacts are provided by asparagine 209 and aspartate 223. Substrate is bound by residues asparagine 274 and 331-333 (GIM).

This sequence belongs to the succinate/malate CoA ligase beta subunit family. In terms of assembly, heterotetramer of two alpha and two beta subunits. Mg(2+) serves as cofactor.

It carries out the reaction succinate + ATP + CoA = succinyl-CoA + ADP + phosphate. The catalysed reaction is GTP + succinate + CoA = succinyl-CoA + GDP + phosphate. It participates in carbohydrate metabolism; tricarboxylic acid cycle; succinate from succinyl-CoA (ligase route): step 1/1. In terms of biological role, succinyl-CoA synthetase functions in the citric acid cycle (TCA), coupling the hydrolysis of succinyl-CoA to the synthesis of either ATP or GTP and thus represents the only step of substrate-level phosphorylation in the TCA. The beta subunit provides nucleotide specificity of the enzyme and binds the substrate succinate, while the binding sites for coenzyme A and phosphate are found in the alpha subunit. This is Succinate--CoA ligase [ADP-forming] subunit beta from Nitrobacter winogradskyi (strain ATCC 25391 / DSM 10237 / CIP 104748 / NCIMB 11846 / Nb-255).